Consider the following 386-residue polypeptide: Cell division protein FtsZ (386 aa).

GTP contacts are provided by residues 18–22, 105–107, Glu136, Arg140, and Asp184; these read GGGVN and GTG.

It belongs to the FtsZ family. In terms of assembly, homodimer. Polymerizes to form a dynamic ring structure in a strictly GTP-dependent manner. Interacts directly with several other division proteins.

It is found in the cytoplasm. Essential cell division protein that forms a contractile ring structure (Z ring) at the future cell division site. The regulation of the ring assembly controls the timing and the location of cell division. One of the functions of the FtsZ ring is to recruit other cell division proteins to the septum to produce a new cell wall between the dividing cells. Binds GTP and shows GTPase activity. This is Cell division protein FtsZ from Mycobacterium kansasii.